The chain runs to 749 residues: Signal transducer and activator of transcription 4 (749 aa).

Positions 570 to 665 constitute an SH2 domain; that stretch reads WIDGYIMGFV…ENPLKYLYPD (96 aa). Position 668 is an N6-acetyllysine (K668). Y694 bears the Phosphotyrosine; by JAK mark. S722 carries the post-translational modification Phosphoserine.

The protein belongs to the transcription factor STAT family. In terms of assembly, forms a homodimer or a heterodimer with a related family member. Interacts with ARL2BP. Interacts with STAT1. Interacts with JUN; this complex efficiently interacts with the AP-1-related sequence of the IFN-gamma promoter. In terms of processing, acetylation at Lys-668 is required for JAK2-mediated phosphorylation and activation of STAT4. Post-translationally, tyrosine phosphorylated upon IL12 and IFN-alpha activation, but not by IFN-gamma in T-lymphocytes and NK cells. Serine phosphorylation is required for maximal transcriptional activity but not for DNA binding. Phosphorylation by MAP2K6 at Ser-722 is required for full transcriptional activity induced by IL12. However this serine phosphorylation is not required for cell proliferation although critical for IFN-gamma production. As to expression, expression is restricted to testis, thymus, and spleen.

Its subcellular location is the cytoplasm. The protein localises to the nucleus. Transcriptional regulator mainly expressed in hematopoietic cells that plays a critical role in cellular growth, differentiation and immune response. Plays a key role in the differentiation of T-helper 1 cells and the production of interferon-gamma. Also participates in multiple neutrophil functions including chemotaxis and production of the neutrophil extracellular traps. After IL12 binding to its receptor IL12RB2, STAT4 interacts with the intracellular domain of IL12RB2 and becomes tyrosine phosphorylated. Phosphorylated STAT4 then homodimerizes and migrates to the nucleus where it can recognize STAT target sequences present in IL12 responsive genes. Although IL12 appears to be the predominant activating signal, STAT4 can also be phosphorylated and activated in response to IFN-gamma stimulation via JAK1 and TYK2 and in response to different interleukins including IL23, IL2 and IL35. Transcription activation of IFN-gamma gene is mediated by interaction with JUN that forms a complex that efficiently interacts with the AP-1-related sequence of the IFN-gamma promoter. In response to IFN-alpha/beta signaling, acts as a transcriptional repressor and suppresses IL5 and IL13 mRNA expression during response to T-cell receptor (TCR) activation. In Mus musculus (Mouse), this protein is Signal transducer and activator of transcription 4 (Stat4).